Consider the following 139-residue polypeptide: Transcription antitermination protein NusB (139 aa).

It belongs to the NusB family.

Involved in transcription antitermination. Required for transcription of ribosomal RNA (rRNA) genes. Binds specifically to the boxA antiterminator sequence of the ribosomal RNA (rrn) operons. This Klebsiella pneumoniae (strain 342) protein is Transcription antitermination protein NusB.